A 312-amino-acid polypeptide reads, in one-letter code: uncharacterized protein (312 aa).

Its subcellular location is the mitochondrion. This is an uncharacterized protein from Schizosaccharomyces pombe (strain 972 / ATCC 24843) (Fission yeast).